The chain runs to 117 residues: Large ribosomal subunit protein uL18 (117 aa).

Belongs to the universal ribosomal protein uL18 family. Part of the 50S ribosomal subunit; part of the 5S rRNA/L5/L18/L25 subcomplex. Contacts the 5S and 23S rRNAs.

This is one of the proteins that bind and probably mediate the attachment of the 5S RNA into the large ribosomal subunit, where it forms part of the central protuberance. The chain is Large ribosomal subunit protein uL18 from Colwellia psychrerythraea (strain 34H / ATCC BAA-681) (Vibrio psychroerythus).